Reading from the N-terminus, the 77-residue chain is Small ribosomal subunit protein uS17 (77 aa).

This sequence belongs to the universal ribosomal protein uS17 family. Part of the 30S ribosomal subunit.

In terms of biological role, one of the primary rRNA binding proteins, it binds specifically to the 5'-end of 16S ribosomal RNA. The sequence is that of Small ribosomal subunit protein uS17 from Anaplasma marginale (strain St. Maries).